The following is a 726-amino-acid chain: Transcription factor 12 (726 aa).

Disordered regions lie at residues Ser27–Phe75, Leu89–Asp223, Tyr243–Asp267, Ser289–Pro309, Pro345–Ala367, Thr380–Ser409, Met501–Leu532, Val558–Met624, and Glu694–Leu726. Polar residues predominate over residues Pro29–Ala47. Low complexity predominate over residues Ser55 to Gly74. 3 stretches are compositionally biased toward polar residues: residues Pro145 to Gly157, Gly249 to Leu263, and Phe291 to Pro309. The segment covering Thr348–Pro359 has biased composition (low complexity). Composition is skewed to polar residues over residues Gly389 to Ser409 and Gly510 to Leu532. A compositionally biased stretch (basic and acidic residues) spans Glu559–Leu575. Over residues Ser592 to Ser603 the composition is skewed to low complexity. The segment covering Pro612–Met624 has biased composition (basic and acidic residues). The bHLH domain occupies Glu621–Leu674. A class A specific domain region spans residues Gln676 to Ser699. Residues Thr717–Leu726 are compositionally biased toward polar residues.

In terms of assembly, efficient DNA binding requires dimerization with another bHLH protein.

Its subcellular location is the nucleus. Its function is as follows. Transcriptional regulator. Involved in the initiation of neuronal differentiation. Activates transcription by binding to the E box (5'-CANNTG-3'). May be involved in the functional network that regulates the development of the GnRH axis. The protein is Transcription factor 12 (tcf12) of Danio rerio (Zebrafish).